We begin with the raw amino-acid sequence, 272 residues long: Endoplasmic reticulum resident protein 27 (272 aa).

Residues 1–25 (MEAMPSRCLFLLFLSTCKLSPEVVA) form the signal peptide. The 114-residue stretch at 38–151 (EPMRLTDVQA…LVTEYNAITA (114 aa)) folds into the Thioredoxin domain. Asn99 carries an N-linked (GlcNAc...) asparagine glycan. The segment at 229–232 (DKWD) is PDIA3-binding site. The Prevents secretion from ER motif lies at 269 to 272 (KVEL).

It belongs to the protein disulfide isomerase family. Interacts with PDIA3.

Its subcellular location is the endoplasmic reticulum lumen. Functionally, specifically binds unfolded proteins and may recruit protein disulfide isomerase PDIA3 to unfolded substrates. Binds protein substrates via a hydrophobic pocket in the C-terminal domain. May play a role in the unfolded stress response. This Bos taurus (Bovine) protein is Endoplasmic reticulum resident protein 27 (ERP27).